Reading from the N-terminus, the 1292-residue chain is Myosin-1 (1292 aa).

The region spanning 35 to 714 (VGVSDLTLLS…TLFALENMRD (680 aa)) is the Myosin motor domain. ATP is bound at residue 128–135 (GESGAGKT). Phosphoserine is present on S356. The interval 403–485 (SIGILDIYGF…PGIFAALNDS (83 aa)) is actin-binding. IQ domains follow at residues 718–738 (HNMA…RIDS) and 739–764 (AIRI…YGNK). Residues 770 to 960 (KERRAMSLLG…TIMVRRGRPG (191 aa)) form the TH1 domain. Disordered stretches follow at residues 956–991 (RGRP…GHPT), 1017–1180 (YSLN…FPLK), and 1227–1258 (PVAS…SAAT). The span at 1062–1081 (MDNSSAAYGNASALPNSAPS) shows a compositional bias: polar residues. 2 stretches are compositionally biased toward pro residues: residues 1087–1121 (ASRP…PMPR) and 1142–1155 (APPP…PPAA). In terms of domain architecture, SH3 spans 1157–1219 (PSEPVYEAAF…PTAYIVESKA (63 aa)). Residues 1240 to 1258 (ATREAGTTSAATAAASAAT) show a composition bias toward low complexity.

This sequence belongs to the TRAFAC class myosin-kinesin ATPase superfamily. Myosin family. Post-translationally, phosphorylation of the TEDS site (Ser-356) is required for the polarization of the actin cytoskeleton. Phosphorylation probably activates the myosin-I ATPase activity.

The protein localises to the cytoplasm. The protein resides in the cytoskeleton. It is found in the actin patch. Functionally, type-I myosin implicated in the organization of the actin cytoskeleton. Required for proper actin cytoskeleton polarization. At the cell cortex, assembles in patch-like structures together with proteins from the actin-polymerizing machinery and promotes actin assembly. Functions as actin nucleation-promoting factor (NPF) for the Arp2/3 complex. The sequence is that of Myosin-1 (MYO1) from Eremothecium gossypii (strain ATCC 10895 / CBS 109.51 / FGSC 9923 / NRRL Y-1056) (Yeast).